Reading from the N-terminus, the 219-residue chain is Vesicle-associated membrane protein 711 (219 aa).

Alanine 2 is modified (N-acetylalanine). The Cytoplasmic portion of the chain corresponds to 2-189 (AILYALVARG…RSNVWWRNCK (188 aa)). Positions 7–111 (LVARGTVVLS…AMNEEFSRVL (105 aa)) constitute a Longin domain. The region spanning 126–186 (RINRIKGEMN…RRFRSNVWWR (61 aa)) is the v-SNARE coiled-coil homology domain. A helical; Anchor for type IV membrane protein transmembrane segment spans residues 190–210 (LTVLLILLLLVIIYIAVAFLC). Residues 211-219 (HGPTLPSCI) are Vesicular-facing.

Belongs to the synaptobrevin family. As to expression, expressed in flowers, leaves, stems and roots.

Its subcellular location is the vacuole membrane. The protein resides in the prevacuolar compartment membrane. Its function is as follows. Involved in the targeting and/or fusion of transport vesicles to their target membrane. In Arabidopsis thaliana (Mouse-ear cress), this protein is Vesicle-associated membrane protein 711.